We begin with the raw amino-acid sequence, 1391 residues long: Leucine-rich PPR motif-containing protein, mitochondrial (1391 aa).

The N-terminal 42 residues, 1–42, are a transit peptide targeting the mitochondrion; that stretch reads MSALLAGARFLLRPGLRALPAPCVRLSPGQGRYLNNTPGHFA. 15 PPR repeats span residues 110-144, 145-179, 180-214, 215-249, 250-284, 389-425, 704-738, 741-775, 779-813, 815-850, 948-982, 1028-1062, 1063-1093, 1100-1134, and 1310-1344; these read LLRS…GAVF, DVSH…NVQP, NRVT…DLPI, TEAV…GIEP, GPET…EGSL, NLHS…GMPV, AIGT…DSSA, DTSK…DVPL, TTTS…GLAK, TSNL…NCMP, RDDM…NVIP, PESS…GTAM, SASA…AENH, NDAA…DKVP, and RETA…SVSP. Residues 1118 to 1387 are RNA-binding; sequence KDALASLKAM…KLKKDKADSY (270 aa).

Its subcellular location is the mitochondrion. It localises to the nucleus. Functionally, may play a role in RNA metabolism in both nuclei and mitochondria. May bind mature mRNA in the nucleus outer membrane. In mitochondria binds to poly(A) mRNA. May be involved in transcription regulation. Binds single-stranded DNA. The protein is Leucine-rich PPR motif-containing protein, mitochondrial (lrpprc) of Xenopus tropicalis (Western clawed frog).